Consider the following 288-residue polypeptide: Homeobox protein Hox-B4a (288 aa).

The segment at 10 to 136 (SNYVDPKFPP…ASSPASTRKD (127 aa)) is disordered. Polar residues predominate over residues 118–132 (CGQTPHSQGASSPAS). Positions 139 to 144 (VYPWMK) match the Antp-type hexapeptide motif. Residues 160–219 (PKRSRTAYTRQQVLELEKEFHYNRYLTRRRRVEIAHTLCLSERQIKIWFQNRRMKWKKDH) constitute a DNA-binding region (homeobox).

The protein belongs to the Antp homeobox family. Deformed subfamily.

It localises to the nucleus. Functionally, sequence-specific transcription factor which is part of a developmental regulatory system that provides cells with specific positional identities on the anterior-posterior axis. This is Homeobox protein Hox-B4a (hoxb4a) from Takifugu rubripes (Japanese pufferfish).